Reading from the N-terminus, the 700-residue chain is Calpain-2 catalytic subunit (700 aa).

An N-acetylalanine modification is found at alanine 2. The propeptide at 2-19 is anchors to the small subunit; it reads AGIAAKLAKDREAAEGLG. The 300-residue stretch at 45 to 344 folds into the Calpain catalytic domain; sequence LFQDPSFPAI…YSRLEICNLT (300 aa). Positions 89, 91, and 96 each coordinate Ca(2+). Cysteine 105 is a catalytic residue. Ca(2+) is bound by residues glutamate 175, glutamine 229, and lysine 230. Residues histidine 262 and asparagine 286 contribute to the active site. Ca(2+) contacts are provided by glutamate 292, aspartate 299, and glutamate 323. Residues 345-514 are domain III; it reads PDTLTSDTYK…KKADYQAVDD (170 aa). The interval 515 to 529 is linker; sequence EIEANLEEFDISEDD. The interval 530-700 is domain IV; it reads IDDGFRRLFA…LISWLCFSVL (171 aa). The Ca(2+) site is built by alanine 542, aspartate 545, glutamate 547, glutamate 552, aspartate 585, aspartate 587, serine 589, lysine 591, glutamate 596, aspartate 615, aspartate 617, serine 619, threonine 621, glutamate 626, aspartate 658, and asparagine 661. 2 consecutive EF-hand domains span residues 572–605 and 602–637; these read FSIE…TKIQ and TKIQ…AGFK. Residues 667–700 enclose the EF-hand 3 domain; that stretch reads VRLETLFKIFKQLDPENTGTIELDLISWLCFSVL.

The protein belongs to the peptidase C2 family. Forms a heterodimer with a small (regulatory) subunit (CAPNS1). Interacts with CPEB3; this leads to cleavage of CPEB3. Interacts with PIDD1 alternative open reading frame protein altPIDD1. Requires Ca(2+) as cofactor. As to expression, ubiquitous.

Its subcellular location is the cytoplasm. It localises to the cell membrane. The catalysed reaction is Broad endopeptidase specificity.. Activated by 200-1000 micromolar concentrations of calcium and inhibited by calpastatin. Its function is as follows. Calcium-regulated non-lysosomal thiol-protease which catalyzes limited proteolysis of substrates involved in cytoskeletal remodeling and signal transduction. Proteolytically cleaves MYOC at 'Arg-226'. Proteolytically cleaves CPEB3 following neuronal stimulation which abolishes CPEB3 translational repressor activity, leading to translation of CPEB3 target mRNAs. In Homo sapiens (Human), this protein is Calpain-2 catalytic subunit (CAPN2).